Here is a 734-residue protein sequence, read N- to C-terminus: Cytoplasmic polyadenylation element-binding protein 3 (734 aa).

Disordered regions lie at residues 1–31, 98–185, and 220–283; these read MDRN…RNVP, GSKK…AARN, and RGSL…LPPR. Residues 16 to 26 show a composition bias toward basic and acidic residues; the sequence is PAEHPGDEKSG. Low complexity-rich tracts occupy residues 121 to 140 and 232 to 242; these read SRRT…SPSR and KSFSSTTTSSS. The segment covering 243–256 has biased composition (basic and acidic residues); that stretch reads PEKEREKEKEKIEQ. Positions 259 to 275 are enriched in polar residues; the sequence is YGTTQRQSVNSQQSSAS. The RRM domain maps to 294 to 316; it reads IFVGGVPWDITEAALKDSFGEFG. Disordered stretches follow at residues 564–593 and 630–657; these read KAYQ…SNNS and TVYD…SNSN. Residues 576–593 are compositionally biased toward low complexity; sequence LSSNSPSKARDGQNSNNS.

Functionally, cytoplasmic polyadenylation element binding protein that binds to and regulates the translation of specific mRNAs. The protein is Cytoplasmic polyadenylation element-binding protein 3 (cpb-3) of Caenorhabditis japonica.